Reading from the N-terminus, the 463-residue chain is L-seryl-tRNA(Sec) selenium transferase (463 aa).

An N6-(pyridoxal phosphate)lysine modification is found at lysine 295.

The protein belongs to the SelA family. Homodecamer; pentamer of dimers. Binds only one seryl-tRNA(Sec) per dimer. The cofactor is pyridoxal 5'-phosphate.

It localises to the cytoplasm. It carries out the reaction L-seryl-tRNA(Sec) + selenophosphate + H(+) = L-selenocysteinyl-tRNA(Sec) + phosphate. Its pathway is aminoacyl-tRNA biosynthesis; selenocysteinyl-tRNA(Sec) biosynthesis; selenocysteinyl-tRNA(Sec) from L-seryl-tRNA(Sec) (bacterial route): step 1/1. In terms of biological role, converts seryl-tRNA(Sec) to selenocysteinyl-tRNA(Sec) required for selenoprotein biosynthesis. The polypeptide is L-seryl-tRNA(Sec) selenium transferase (Shigella boydii serotype 18 (strain CDC 3083-94 / BS512)).